The following is a 1162-amino-acid chain: MNQWQLSYQSPVELTEHLRKSYWAYDAKEKSATKMAFDQDVNLIWVGDTYGRVSSYDPSYSLYTRHTAHIGAEPVVELLSHKQGVLSLGGESLNFANRRSVTKLHVTSADIAQLCDMRAMCYGSNSQNTVYCGGTNLASGLVAVDLVKGRLSNTVQYSSKVKLMQSSNRLMAVARQNGMLDLLDPNSNTVVKTFSGHSCMVSSMDFRDHTLVTAGKSKRFNMMYPDQFVNVYDLRIMKQLPPISFSKNTEYMGNGACYMVGADFVQLHPILPTVVVIGSVTGAFDFVDLSNPTVRTQYCHPCQSVTQLQLSPSGDYIAFIEHDNNINMWSRSNGMTGFTSTATTILEYPDYPDDGILAGATSIDDYSYPLSSVGLPYYNEKLLSAWHQTVFRSDGTIPMKVPLPPKSSAASSSHTALSTSSDSRPNTARSGNPSSGGQKYRLLPYDRHKYGHRNVAVPYRSLRERKKKLLITDEDGKDKQELMNYKPSNDREVPPAFTKLQMVYGRFGVQDFDFKAFNKTRYSGLETDIDNVYTNAVLQMYRFVPEVYNFLVSCLKMENFSDNSLLTELGSLYDMMVRANGEICRSSNFQEALASIPKSYLLGLITDSIDNALEPNTTVSGTSISDSDASGSSMTAKLESMVLGDDKTTISCHDNNDNSLTTPQKFNTFLLNRLLFEELQMKINTTQSIVLEELLGIDVQVTTRSISPCANFTRRSDIIPVLTVTSPISNNIKYVNKKLNNQTILPYIESSMSRLKHTKAMCEKCFKCETVESEKTVRNLPPLLSLNISLTSDEWATAKTVRGWLTKEFYATISKDRPILKLQPTDLKTTNAIFKYELNGYVARICDYITEPHLVAYSKIFDPTTRTYKWYMFNDFLVQEVDEEEALNISYWWKTPEIAIYSDAEELTKPFVPASFYTINYSILYRDHFANGMRESIKKEYRLLTAEEAPKPGSLVALDAEFVALSEDQVEISCKGTKTLIKPAKTALARVSVLRGEGDLAGVPFIDDYIVNTKHIEDYLTKYSGIEPGDLDPDTSSKPLVTRRVVLRKIWLLLQLGCIFVGHGLYNDFRNINIHVPKEQTRDTALYYLQGRRYLSLRYLAYALLDKDIQKGNHDSIEDAYTALVLYRKYLDLREKGIFETVLNRIYEEGRASNYRVPGDLQ.

WD repeat units lie at residues 27–66 (AKEKSATKMAFDQDVNLIWVGDTYGRVSSYDPSYSLYTRH), 153–193 (NTVQ…VVKT), 196–233 (GHSCMVSSMDFRDHTLVTAGKSKRFNMMYPDQFVNVYD), and 300–339 (HPCQSVTQLQLSPSGDYIAFIEHDNNINMWSRSNGMTGFT). The segment at 341 to 491 (TATTILEYPD…LMNYKPSNDR (151 aa)) is linker. The tract at residues 401 to 443 (VPLPPKSSAASSSHTALSTSSDSRPNTARSGNPSSGGQKYRLL) is disordered. The span at 407 to 423 (SSAASSSHTALSTSSDS) shows a compositional bias: low complexity. The span at 424 to 437 (RPNTARSGNPSSGG) shows a compositional bias: polar residues. The USP domain occupies 492 to 904 (EVPPAFTKLQ…TPEIAIYSDA (413 aa)). The 171-residue stretch at 956–1126 (VALDAEFVAL…IEDAYTALVL (171 aa)) folds into the Exonuclease domain. Residues aspartate 959, glutamate 961, aspartate 1068, and aspartate 1119 each contribute to the a divalent metal cation site.

It belongs to the peptidase C19 family. PAN2 subfamily. In terms of assembly, forms a heterotrimer with an asymmetric homodimer of the regulatory subunit PAN3 to form the poly(A)-nuclease (PAN) deadenylation complex. The cofactor is a divalent metal cation.

It localises to the cytoplasm. It carries out the reaction Exonucleolytic cleavage of poly(A) to 5'-AMP.. With respect to regulation, positively regulated by the regulatory subunit PAN3. Catalytic subunit of the poly(A)-nuclease (PAN) deadenylation complex, one of two cytoplasmic mRNA deadenylases involved in mRNA turnover. PAN specifically shortens poly(A) tails of RNA and the activity is stimulated by poly(A)-binding protein PAB1. PAN deadenylation is followed by rapid degradation of the shortened mRNA tails by the CCR4-NOT complex. Deadenylated mRNAs are then degraded by two alternative mechanisms, namely exosome-mediated 3'-5' exonucleolytic degradation, or deadenylation-dependent mRNA decaping and subsequent 5'-3' exonucleolytic degradation by XRN1. May also be involved in post-transcriptional maturation of mRNA poly(A) tails. In Eremothecium gossypii (strain ATCC 10895 / CBS 109.51 / FGSC 9923 / NRRL Y-1056) (Yeast), this protein is PAN2-PAN3 deadenylation complex catalytic subunit PAN2.